A 379-amino-acid chain; its full sequence is 3-dehydroquinate synthase (379 aa).

NAD(+)-binding positions include 113-117, 137-138, K150, and K159; these read GVIGD and TS. Residues E192, H256, and H274 each coordinate Zn(2+).

The protein belongs to the sugar phosphate cyclases superfamily. Dehydroquinate synthase family. Requires Co(2+) as cofactor. The cofactor is Zn(2+). It depends on NAD(+) as a cofactor.

The protein resides in the cytoplasm. It carries out the reaction 7-phospho-2-dehydro-3-deoxy-D-arabino-heptonate = 3-dehydroquinate + phosphate. The protein operates within metabolic intermediate biosynthesis; chorismate biosynthesis; chorismate from D-erythrose 4-phosphate and phosphoenolpyruvate: step 2/7. Its function is as follows. Catalyzes the conversion of 3-deoxy-D-arabino-heptulosonate 7-phosphate (DAHP) to dehydroquinate (DHQ). This is 3-dehydroquinate synthase from Zymomonas mobilis subsp. mobilis (strain ATCC 31821 / ZM4 / CP4).